The sequence spans 257 residues: Isoprenyl transferase (257 aa).

Asp33 is an active-site residue. A Mg(2+)-binding site is contributed by Asp33. Substrate-binding positions include 34–37 (GNGR), Trp38, Arg46, His50, and 78–80 (STE). Asn81 acts as the Proton acceptor in catalysis. Substrate is bound by residues Trp82, Arg84, Arg204, and 210–212 (RLS). Residue Glu223 coordinates Mg(2+).

Belongs to the UPP synthase family. Homodimer. Mg(2+) is required as a cofactor.

Functionally, catalyzes the condensation of isopentenyl diphosphate (IPP) with allylic pyrophosphates generating different type of terpenoids. The chain is Isoprenyl transferase from Clostridium acetobutylicum (strain ATCC 824 / DSM 792 / JCM 1419 / IAM 19013 / LMG 5710 / NBRC 13948 / NRRL B-527 / VKM B-1787 / 2291 / W).